The sequence spans 98 residues: UPF0235 protein Pmen_4153 (98 aa).

It belongs to the UPF0235 family.

The protein is UPF0235 protein Pmen_4153 of Ectopseudomonas mendocina (strain ymp) (Pseudomonas mendocina).